We begin with the raw amino-acid sequence, 282 residues long: Transcription repressor MYB4 (282 aa).

2 HTH myb-type domains span residues 9–61 (KAHT…INYL) and 62–116 (RPDL…RRKL). 2 consecutive DNA-binding regions (H-T-H motif) follow at residues 37–61 (WRSL…INYL) and 89–112 (WSLI…NTHI). Residues 119–145 (RGIDPTSHRPIQESSASQDSKPTQLEP) form a disordered region. Residues 130 to 145 (QESSASQDSKPTQLEP) show a composition bias toward polar residues.

In terms of assembly, interacts with BHLH12/MYC1 and BHLH42/TT8. Interacts with SAD2. In terms of tissue distribution, widely expressed at low level. Highly expressed in siliques. Weakly expressed in seedlings, young and mature leaves, cauline leaves, stems, flower buds and roots.

It localises to the nucleus. In terms of biological role, transcription repressor involved in regulation of protection against UV. Mediates transcriptional repression of CYP73A5, the gene encoding trans-cinnamate 4-monooxygenase, thereby regulating the accumulation of the UV-protectant compound sinapoylmalate. The sequence is that of Transcription repressor MYB4 (MYB4) from Arabidopsis thaliana (Mouse-ear cress).